The chain runs to 156 residues: D-aminoacyl-tRNA deacylase (156 aa).

The Gly-cisPro motif, important for rejection of L-amino acids motif lies at 139-140 (GP).

The protein belongs to the DTD family. Homodimer.

The protein localises to the cytoplasm. The enzyme catalyses glycyl-tRNA(Ala) + H2O = tRNA(Ala) + glycine + H(+). It carries out the reaction a D-aminoacyl-tRNA + H2O = a tRNA + a D-alpha-amino acid + H(+). Its function is as follows. An aminoacyl-tRNA editing enzyme that deacylates mischarged D-aminoacyl-tRNAs. Also deacylates mischarged glycyl-tRNA(Ala), protecting cells against glycine mischarging by AlaRS. Acts via tRNA-based rather than protein-based catalysis; rejects L-amino acids rather than detecting D-amino acids in the active site. By recycling D-aminoacyl-tRNA to D-amino acids and free tRNA molecules, this enzyme counteracts the toxicity associated with the formation of D-aminoacyl-tRNA entities in vivo and helps enforce protein L-homochirality. The sequence is that of D-aminoacyl-tRNA deacylase from Marinobacter nauticus (strain ATCC 700491 / DSM 11845 / VT8) (Marinobacter aquaeolei).